Consider the following 87-residue polypeptide: Small ribosomal subunit protein uS15 (87 aa).

It belongs to the universal ribosomal protein uS15 family. Part of the 30S ribosomal subunit. Forms a bridge to the 50S subunit in the 70S ribosome, contacting the 23S rRNA.

Functionally, one of the primary rRNA binding proteins, it binds directly to 16S rRNA where it helps nucleate assembly of the platform of the 30S subunit by binding and bridging several RNA helices of the 16S rRNA. Its function is as follows. Forms an intersubunit bridge (bridge B4) with the 23S rRNA of the 50S subunit in the ribosome. This Dehalococcoides mccartyi (strain ATCC BAA-2100 / JCM 16839 / KCTC 5957 / BAV1) protein is Small ribosomal subunit protein uS15.